An 86-amino-acid chain; its full sequence is Conotoxin S6.10 (86 aa).

The signal sequence occupies residues 1-22 (MKLTCVLIIAVLFLTACQLATA). The propeptide occupies 23-45 (KTYSKGRQKHRALRSTDKNIKLT). Cystine bridges form between Cys-48/Cys-62, Cys-55/Cys-66, and Cys-61/Cys-73.

It belongs to the conotoxin O1 superfamily. In terms of tissue distribution, expressed by the venom duct.

It localises to the secreted. The polypeptide is Conotoxin S6.10 (Conus striatus (Striated cone)).